The following is a 248-amino-acid chain: MRETDEQPVAGGAASTEGLETSIGYRFTDRRFLDEALTHRSWLNEVRSPTVPDNERLEFFGDAILGFCIGKMLLRHYPESREGALARMKSALVGEETLADLAAAVELGSYLRLGRGEERSGGRHRRSLLANALEALLAAMYLDGGMAPVERLVDAWFGPRLAGVAAGIKGRDFKTDFQELAQAQYGGLPRYVLVDTSGPAHDLRFTVAAYVGERLLGQGTGRSKKEAEQAAARQCLERLETGRCSAAP.

In terms of domain architecture, RNase III spans 16–145 (TEGLETSIGY…LLAAMYLDGG (130 aa)). Residue Glu58 coordinates Mg(2+). Asp62 is an active-site residue. Residues Asn131 and Glu134 each coordinate Mg(2+). Glu134 is an active-site residue. One can recognise a DRBM domain in the interval 172–241 (DFKTDFQELA…ARQCLERLET (70 aa)).

It belongs to the ribonuclease III family. In terms of assembly, homodimer. It depends on Mg(2+) as a cofactor.

It localises to the cytoplasm. The enzyme catalyses Endonucleolytic cleavage to 5'-phosphomonoester.. Digests double-stranded RNA. Involved in the processing of primary rRNA transcript to yield the immediate precursors to the large and small rRNAs (23S and 16S). Processes some mRNAs, and tRNAs when they are encoded in the rRNA operon. Processes pre-crRNA and tracrRNA of type II CRISPR loci if present in the organism. The polypeptide is Ribonuclease 3 (Geobacter sulfurreducens (strain ATCC 51573 / DSM 12127 / PCA)).